Consider the following 65-residue polypeptide: DNA gyrase inhibitor YacG (65 aa).

Zn(2+) contacts are provided by Cys-9, Cys-12, Cys-28, and Cys-32. Residues 44–65 are disordered; the sequence is EKRIPSSSDLSESDDWSEEPKQ. Residues 54–65 show a composition bias toward acidic residues; that stretch reads SESDDWSEEPKQ.

It belongs to the DNA gyrase inhibitor YacG family. In terms of assembly, interacts with GyrB. Zn(2+) is required as a cofactor.

Its function is as follows. Inhibits all the catalytic activities of DNA gyrase by preventing its interaction with DNA. Acts by binding directly to the C-terminal domain of GyrB, which probably disrupts DNA binding by the gyrase. This chain is DNA gyrase inhibitor YacG, found in Escherichia coli O6:H1 (strain CFT073 / ATCC 700928 / UPEC).